The sequence spans 100 residues: Urease subunit gamma (100 aa).

Belongs to the urease gamma subunit family. As to quaternary structure, heterotrimer of UreA (gamma), UreB (beta) and UreC (alpha) subunits. Three heterotrimers associate to form the active enzyme.

It localises to the cytoplasm. The catalysed reaction is urea + 2 H2O + H(+) = hydrogencarbonate + 2 NH4(+). Its pathway is nitrogen metabolism; urea degradation; CO(2) and NH(3) from urea (urease route): step 1/1. The sequence is that of Urease subunit gamma from Synechocystis sp. (strain ATCC 27184 / PCC 6803 / Kazusa).